Consider the following 461-residue polypeptide: D-phenylhydantoinase (461 aa).

3 residues coordinate a divalent metal cation: H59, H61, and K151. The residue at position 151 (K151) is an N6-carboxylysine. Residue Y156 coordinates substrate. A divalent metal cation-binding residues include H182 and H239. S286 is a binding site for substrate. D313 contacts a divalent metal cation. N335 contacts substrate.

Belongs to the metallo-dependent hydrolases superfamily. Hydantoinase/dihydropyrimidinase family. Homotetramer. It depends on a divalent metal cation as a cofactor. Post-translationally, carboxylation allows a single lysine to coordinate two divalent metal cations.

The catalysed reaction is D-5-phenylhydantoin + H2O = N-carbamoyl-D-phenylglycine + H(+). Catalyzes the stereospecific hydrolysis of the cyclic amide bond of D-hydantoin derivatives with an aromatic side chains at the 5'-position. Has no activity on dihydropyrimidines. The physiological function is unknown. The sequence is that of D-phenylhydantoinase from Escherichia coli O17:K52:H18 (strain UMN026 / ExPEC).